The sequence spans 257 residues: Phosphate import ATP-binding protein PstB (257 aa).

The ABC transporter domain maps to L5–E246. G37 to S44 lines the ATP pocket.

This sequence belongs to the ABC transporter superfamily. Phosphate importer (TC 3.A.1.7) family. In terms of assembly, the complex is composed of two ATP-binding proteins (PstB), two transmembrane proteins (PstC and PstA) and a solute-binding protein (PstS).

The protein localises to the cell membrane. It carries out the reaction phosphate(out) + ATP + H2O = ADP + 2 phosphate(in) + H(+). In terms of biological role, part of the ABC transporter complex PstSACB involved in phosphate import. Responsible for energy coupling to the transport system. This chain is Phosphate import ATP-binding protein PstB, found in Tropheryma whipplei (strain Twist) (Whipple's bacillus).